A 468-amino-acid polypeptide reads, in one-letter code: ATP synthase subunit beta (468 aa).

155 to 162 (GGAGVGKT) lines the ATP pocket.

It belongs to the ATPase alpha/beta chains family. As to quaternary structure, F-type ATPases have 2 components, CF(1) - the catalytic core - and CF(0) - the membrane proton channel. CF(1) has five subunits: alpha(3), beta(3), gamma(1), delta(1), epsilon(1). CF(0) has three main subunits: a(1), b(2) and c(9-12). The alpha and beta chains form an alternating ring which encloses part of the gamma chain. CF(1) is attached to CF(0) by a central stalk formed by the gamma and epsilon chains, while a peripheral stalk is formed by the delta and b chains.

Its subcellular location is the cell membrane. It catalyses the reaction ATP + H2O + 4 H(+)(in) = ADP + phosphate + 5 H(+)(out). In terms of biological role, produces ATP from ADP in the presence of a proton gradient across the membrane. The catalytic sites are hosted primarily by the beta subunits. This Streptococcus agalactiae serotype Ia (strain ATCC 27591 / A909 / CDC SS700) protein is ATP synthase subunit beta.